The sequence spans 250 residues: Geranylgeranylglyceryl phosphate synthase (250 aa).

Positions 23 and 52 each coordinate Mg(2+). Sn-glycerol 1-phosphate contacts are provided by residues 170–176 (YIEAGSG), 202–203 (GG), and 224–225 (GT).

It belongs to the GGGP/HepGP synthase family. Group II subfamily. It depends on Mg(2+) as a cofactor.

Its subcellular location is the cytoplasm. It carries out the reaction sn-glycerol 1-phosphate + (2E,6E,10E)-geranylgeranyl diphosphate = sn-3-O-(geranylgeranyl)glycerol 1-phosphate + diphosphate. It participates in membrane lipid metabolism; glycerophospholipid metabolism. In terms of biological role, prenyltransferase that catalyzes the transfer of the geranylgeranyl moiety of geranylgeranyl diphosphate (GGPP) to the C3 hydroxyl of sn-glycerol-1-phosphate (G1P). This reaction is the first ether-bond-formation step in the biosynthesis of archaeal membrane lipids. This Methanobrevibacter smithii (strain ATCC 35061 / DSM 861 / OCM 144 / PS) protein is Geranylgeranylglyceryl phosphate synthase.